The sequence spans 1119 residues: Ubiquitin-associated protein 2 (1119 aa).

The interval 1 to 26 (MMTSVSSDHCRGAREKPQISAAQSTQ) is disordered. Residues 8–17 (DHCRGAREKP) show a composition bias toward basic and acidic residues. One can recognise a UBA domain in the interval 48–92 (KNDSDFEAKVKQLMEVTGKNQDECIVALHDCNGDVNKAINILLEG). Positions 105-130 (KKKNFAKENSENKENREKKSEKESSR) form a coiled coil. Basic and acidic residues predominate over residues 110–130 (AKENSENKENREKKSEKESSR). Disordered regions lie at residues 110 to 202 (AKEN…YSDS), 385 to 476 (LGQF…SPST), 622 to 736 (VHNR…SSHQ), 853 to 905 (RDGS…VNPA), 937 to 966 (SAKQ…YSTG), 982 to 1020 (GGYA…GSVY), and 1082 to 1119 (HLPQ…YWTN). An Omega-N-methylarginine modification is found at arginine 166. A compositionally biased stretch (basic residues) spans 168-182 (KRARGRGFGRGRGRG). A compositionally biased stretch (low complexity) spans 389–407 (TTTPSTQQNSTSHPTTTTS). Residues serine 432, serine 439, serine 473, and serine 630 each carry the phosphoserine modification. The segment covering 435–447 (LSQLSQRQQHQSQ) has biased composition (low complexity). A compositionally biased stretch (polar residues) spans 651–662 (SQQTLDTPKTTG). A compositionally biased stretch (low complexity) spans 663 to 678 (PPSALPSVSSLPSTTS). Positions 679-694 (CTALLPSTSQHTGDLT) are enriched in polar residues. Composition is skewed to low complexity over residues 695–736 (SSPL…SSHQ) and 874–900 (SASP…AQQP). Polar residues predominate over residues 943–957 (VNLSTPTPPFQQASG). 2 stretches are compositionally biased toward low complexity: residues 1002 to 1011 (GVSVSSSTTG) and 1088 to 1102 (QSGS…SLQP).

May interact with ANXA2.

The protein localises to the nucleus. It localises to the chromosome. It is found in the cytoplasm. Its function is as follows. Recruits the ubiquitination machinery to RNA polymerase II for polyubiquitination, removal and degradation, when the transcription-coupled nucleotide excision repair (TC-NER) machinery fails to resolve DNA damage. May promote the degradation of ANXA2. This Homo sapiens (Human) protein is Ubiquitin-associated protein 2.